Consider the following 15639-residue polypeptide: FR901469 synthetase (15639 aa).

The Carrier 1 domain maps to 5–81; that stretch reads HTSDGLRKLL…DLVDKIIEQQ (77 aa). Ser42 carries the O-(pantetheine 4'-phosphoryl)serine modification. The segment covering 82–94 has biased composition (acidic residues); that stretch reads LEEEEEDDDSLDN. Residues 82–105 form a disordered region; it reads LEEEEEDDDSLDNESERDHSQKDL. The interval 140–553 is condensation 1; sequence PCLSMQEGCL…RDFLPLTEDD (414 aa). Residues 579-971 are adenylation 1; sequence TISKQPDAVA…LGRRDTQVKI (393 aa). Residues 1108–1184 enclose the Carrier 2 domain; it reads TPATAIEKEL…ELALVARSTT (77 aa). At Ser1145 the chain carries O-(pantetheine 4'-phosphoryl)serine. Positions 1219 to 1626 are epimerase 1; the sequence is RSSNRFNQSV…TITHLVKRLA (408 aa). The segment at 1667 to 2097 is condensation 2; that stretch reads EDVLPCTPIQ…LGNLSLLTNN (431 aa). An adenylation 2 region spans residues 2122 to 2518; that stretch reads QEAAKEYTNA…GRRDNQIKIR (397 aa). Positions 2654–2730 constitute a Carrier 3 domain; the sequence is VPATALEKQL…ELALKAKSTT (77 aa). Ser2691 carries the post-translational modification O-(pantetheine 4'-phosphoryl)serine. The segment at 2761 to 3176 is epimerase 2; it reads VSAGEHRYNQ…TELLHRLEQM (416 aa). The segment at 3215 to 3640 is condensation 3; that stretch reads QDIYPCSPTQ…DDLIMMSPED (426 aa). Residues 3669 to 4059 form an adenylation 3 region; that stretch reads TQPHAPAVAA…MGRIDSQIKI (391 aa). In terms of domain architecture, Carrier 4 spans 4193-4269; it reads PPSNDAERMV…QLAAIVTQRG (77 aa). Ser4230 bears the O-(pantetheine 4'-phosphoryl)serine mark. The condensation 4 stretch occupies residues 4316–4714; the sequence is EDVYPCTPLQ…ILAHGTGLEE (399 aa). Positions 4756-5149 are adenylation 4; the sequence is TEAASTRPDA…GRLDTQAKLR (394 aa). The region spanning 5284-5360 is the Carrier 5 domain; that stretch reads EPATIMERQL…DLASHIDHHT (77 aa). Residue Ser5321 is modified to O-(pantetheine 4'-phosphoryl)serine. Residues 5402–5802 form a condensation 5 region; it reads EDIYPCTPLQ…TVFAQLCDSS (401 aa). The tract at residues 5847-6238 is adenylation 5; the sequence is KYPNEPAVHA…LGRRDSQMKV (392 aa). Residues 6375 to 6451 form the Carrier 6 domain; it reads QPSTTAEIKL…DMAKIVEEHV (77 aa). Position 6412 is an O-(pantetheine 4'-phosphoryl)serine (Ser6412). The interval 6494–6889 is condensation 6; it reads EDVYPATPLQ…RFAKVYQQLS (396 aa). The segment at 6952–7335 is adenylation 6; the sequence is WDGSMTYAEL…GRRDTQIKIR (384 aa). In terms of domain architecture, Carrier 7 spans 7473 to 7546; it reads TAMEEQLRTV…QLALLASTDE (74 aa). At Ser7507 the chain carries O-(pantetheine 4'-phosphoryl)serine. Positions 7580 to 7992 are epimerase 3; it reads MGENRYNQSV…SKTLEELTTQ (413 aa). The tract at residues 8034–8459 is condensation 7; the sequence is EDVFPASPMQ…QRMRNISLAS (426 aa). The interval 8486 to 8882 is adenylation 7; that stretch reads QKSVHARPDA…GRRDTQVKIR (397 aa). The Carrier 8 domain maps to 9015 to 9091; sequence QPATDAERQL…DLAKTIQDSE (77 aa). The residue at position 9052 (Ser9052) is an O-(pantetheine 4'-phosphoryl)serine. Positions 9136-9535 are condensation 8; that stretch reads EDVYPCTPLQ…FAAIFRQLCD (400 aa). The interval 9583–9974 is adenylation 8; that stretch reads KNPHAIAVNA…GRRDNQMKIR (392 aa). The Carrier 9 domain occupies 10110 to 10186; that stretch reads EPATPMEMQL…GLAALIQKQI (77 aa). O-(pantetheine 4'-phosphoryl)serine is present on Ser10147. Residues 10186–10208 form a disordered region; sequence IDEEEEYDDSEEEEEDDEEEVRE. Positions 10187-10206 are enriched in acidic residues; that stretch reads DEEEEYDDSEEEEEDDEEEV. Positions 10240–10662 are condensation 9; it reads VEDVYPCTPL…VLSETDKTKI (423 aa). The segment at 10683 to 11082 is adenylation 9; sequence KQAIERPNAP…GRRDTQIKIR (400 aa). The Carrier 10 domain maps to 11217–11293; the sequence is EPATGMERHL…DLARETESQG (77 aa). O-(pantetheine 4'-phosphoryl)serine is present on Ser11254. The condensation 10 stretch occupies residues 11329–11725; sequence EDVYPCTPLQ…ETIFQQLSSV (397 aa). Residues 11770–12165 form an adenylation 10 region; that stretch reads FKRTADKQPE…GRRDTQIKVR (396 aa). In terms of domain architecture, Carrier 11 spans 12298 to 12374; that stretch reads EPSTEMERRI…DLAAAVQGRI (77 aa). Ser12335 bears the O-(pantetheine 4'-phosphoryl)serine mark. The condensation 11 stretch occupies residues 12418–12830; that stretch reads EDVYPATPLQ…IQDIEMVSEQ (413 aa). The segment at 12861-13249 is adenylation 11; it reads SRADEIAICA…GRRDTQIKIR (389 aa). One can recognise a Carrier 12 domain in the interval 13383–13459; that stretch reads MPGTVQEEQL…QLGQKVKEAV (77 aa). An O-(pantetheine 4'-phosphoryl)serine modification is found at Ser13420. The segment at 13476–13901 is epimerase 4; it reads APIQQMFFEQ…LKDMTSTLLQ (426 aa). Residues 13940–14369 form a condensation 12 region; it reads EDILPCSPIQ…SIVGEHDLQQ (430 aa). Residues 14390–14789 form an adenylation 12 region; sequence RDAAHRTPDA…GRGDGQIKIR (400 aa). Residues 14916–14992 form the Carrier 13 domain; sequence LPASADEGAL…DMASVASAAR (77 aa). Ser14953 is modified (O-(pantetheine 4'-phosphoryl)serine). Residues 15062–15433 form a condensation 13 region; it reads QHAVDLAALK…DIMVRLASQQ (372 aa). Disordered stretches follow at residues 15434-15511 and 15617-15639; these read EGTV…ENRQ and VQTNGHAGKGVTNGVNGGSKGHI. Positions 15455–15472 are enriched in low complexity; sequence NGTNGSNGDGTDAANGIG. The span at 15482–15494 shows a compositional bias: basic and acidic residues; it reads AVEKSSGDAEVEK. Residues 15495–15511 show a composition bias toward polar residues; that stretch reads VSTNGHADNNTSAENRQ.

The protein belongs to the NRP synthetase family.

It participates in antifungal biosynthesis. Its function is as follows. Nonribosomal peptide synthetase; part of the gene cluster that mediates the biosynthesis of the antifungal antibiotic FR901469, an inhibitor of beta-1,3-glucansynthase, exerting antifungal activity against the pathogenes Candida albicans and Aspergillus fumigatus. FR901469 is a cyclic depsipeptide containing 12 amino acid residues and a fatty acid chain. The NRPS frbI contains 12 modules responsible for the formation of the depsipeptide backbone which is denoted as Acyl-Thr-Ala-Tyr-Val-4OHPro-Thr-Thr-3OHPro-threo3OHGln-Gly-Thr-Orn-OH (C71H116N14O23). The PKS frbB is probably involved in the production of the hydrocarbon chain, and the acyl-CoA ligase frbC might be involved in the transport of the chain to the peptide ptoduct of frbI. Because FR901469 contains 3 hydroxylated amino acid residues, the 3 oxygenases frbA, frbH, and frbJ might be participating in amino acid hydroxylation. As no thioesterase domains were detected in frbI or frbB, the thioesterases frbD and frbE may instead release and cyclize the products of the NRPS and PKS, respectively. The polypeptide is FR901469 synthetase (Dothideomycetidae sp. (strain 11243) (Fungal sp. (strain No.11243))).